An 87-amino-acid polypeptide reads, in one-letter code: Potassium channel toxin Ttr-beta-KTx (87 aa).

The first 19 residues, 1–19, serve as a signal peptide directing secretion; it reads MERKWALLLFLGMVTLVSC. A propeptide spanning residues 20–27 is cleaved from the precursor; that stretch reads GLREKHVQ. One can recognise a BetaSPN-type CS-alpha/beta domain in the interval 53-87; that stretch reads QFGCPAYEGYCNNHCQDIKRKDGECHGFKCKCAKD. 3 cysteine pairs are disulfide-bonded: C56-C77, C63-C82, and C67-C84.

This sequence belongs to the long chain scorpion toxin family. Class 1 subfamily. Expressed by the venom gland.

It is found in the secreted. Functionally, inhibits voltage-gated potassium channel. This is Potassium channel toxin Ttr-beta-KTx from Tityus trivittatus (Argentinean scorpion).